The chain runs to 514 residues: 2-isopropylmalate synthase (514 aa).

A Pyruvate carboxyltransferase domain is found at 5–268 (LIIFDTTLRD…DVGIDTSQIV (264 aa)). Mn(2+)-binding residues include aspartate 14, histidine 202, histidine 204, and asparagine 239. Residues 395–514 (KFVSLSQHSE…KDDKVNPQRS (120 aa)) form a regulatory domain region.

Belongs to the alpha-IPM synthase/homocitrate synthase family. LeuA type 1 subfamily. In terms of assembly, homodimer. Requires Mn(2+) as cofactor.

The protein resides in the cytoplasm. The catalysed reaction is 3-methyl-2-oxobutanoate + acetyl-CoA + H2O = (2S)-2-isopropylmalate + CoA + H(+). The protein operates within amino-acid biosynthesis; L-leucine biosynthesis; L-leucine from 3-methyl-2-oxobutanoate: step 1/4. Catalyzes the condensation of the acetyl group of acetyl-CoA with 3-methyl-2-oxobutanoate (2-ketoisovalerate) to form 3-carboxy-3-hydroxy-4-methylpentanoate (2-isopropylmalate). The polypeptide is 2-isopropylmalate synthase (Burkholderia lata (strain ATCC 17760 / DSM 23089 / LMG 22485 / NCIMB 9086 / R18194 / 383)).